A 205-amino-acid chain; its full sequence is Protease (205 aa).

Catalysis depends on residues histidine 54, aspartate 71, and cysteine 120.

The protein belongs to the peptidase C5 family. In terms of assembly, interacts with protease cofactor pVI-C; this interaction is necessary for protease activation.

It is found in the virion. The protein localises to the host nucleus. The enzyme catalyses Cleaves proteins of the adenovirus and its host cell at two consensus sites: -Yaa-Xaa-Gly-Gly-|-Xaa- and -Yaa-Xaa-Gly-Xaa-|-Gly- (in which Yaa is Met, Ile or Leu, and Xaa is any amino acid).. Its activity is regulated as follows. Requires DNA and protease cofactor for maximal activation. Inside nascent virions, becomes partially activated by binding to the viral DNA, allowing it to cleave the cofactor that binds to the protease and fully activates it. Actin, like the viral protease cofactor, seems to act as a cofactor in the cleavage of cytokeratin 18 and of actin itself. Cleaves viral precursor proteins (pTP, pIIIa, pVI, pVII, pVIII, and pX) inside newly assembled particles giving rise to mature virions. Protease complexed to its cofactor slides along the viral DNA to specifically locate and cleave the viral precursors. Mature virions have a weakened organization compared to the unmature virions, thereby facilitating subsequent uncoating. Without maturation, the particle lacks infectivity and is unable to uncoat. Late in adenovirus infection, in the cytoplasm, may participate in the cytoskeleton destruction. Cleaves host cell cytoskeletal keratins K7 and K18. The sequence is that of Protease from Bos taurus (Bovine).